The chain runs to 68 residues: Beta-defensin 1 (68 aa).

Positions 1–21 are cleaved as a signal peptide; it reads MRTSYLLLFTLCLLLSEMASG. The propeptide occupies 22–32; the sequence is GNFLTGLGHRS. Disulfide bonds link Cys-37/Cys-66, Cys-44/Cys-59, and Cys-49/Cys-67.

It belongs to the beta-defensin family. As to quaternary structure, monomer. Homodimer.

It is found in the secreted. The protein resides in the membrane. Its function is as follows. Has bactericidal activity. May act as a ligand for C-C chemokine receptor CCR6. Positively regulates the sperm motility and bactericidal activity in a CCR6-dependent manner. Binds to CCR6 and triggers Ca2+ mobilization in the sperm which is important for its motility. The chain is Beta-defensin 1 (DEFB1) from Pongo pygmaeus (Bornean orangutan).